A 173-amino-acid polypeptide reads, in one-letter code: ATP synthase subunit b (173 aa).

Residues 19–39 (IVWSLIILVIVAVFFYKFFMP) form a helical membrane-spanning segment.

Belongs to the ATPase B chain family. As to quaternary structure, F-type ATPases have 2 components, F(1) - the catalytic core - and F(0) - the membrane proton channel. F(1) has five subunits: alpha(3), beta(3), gamma(1), delta(1), epsilon(1). F(0) has three main subunits: a(1), b(2) and c(10-14). The alpha and beta chains form an alternating ring which encloses part of the gamma chain. F(1) is attached to F(0) by a central stalk formed by the gamma and epsilon chains, while a peripheral stalk is formed by the delta and b chains.

The protein localises to the cell membrane. F(1)F(0) ATP synthase produces ATP from ADP in the presence of a proton or sodium gradient. F-type ATPases consist of two structural domains, F(1) containing the extramembraneous catalytic core and F(0) containing the membrane proton channel, linked together by a central stalk and a peripheral stalk. During catalysis, ATP synthesis in the catalytic domain of F(1) is coupled via a rotary mechanism of the central stalk subunits to proton translocation. In terms of biological role, component of the F(0) channel, it forms part of the peripheral stalk, linking F(1) to F(0). The polypeptide is ATP synthase subunit b (Bifidobacterium longum (strain NCC 2705)).